A 289-amino-acid polypeptide reads, in one-letter code: Proteasome assembly chaperone 1 (289 aa).

A disordered region spans residues 1-38; the sequence is MAATFFGEVVKAPCRAGTEEEEEEEEQSRRDTPEDREV. The residue at position 2 (alanine 2) is an N-acetylalanine. A Phosphothreonine modification is found at threonine 18. Basic and acidic residues predominate over residues 27–38; that stretch reads QSRRDTPEDREV. Threonine 55 is modified (phosphothreonine). Serine 181 carries the post-translational modification Phosphoserine. Lysine 265 bears the N6-acetyllysine mark.

The protein belongs to the PSMG1 family. As to quaternary structure, forms a heterodimer with PSMG2. The PSMG1-PSMG2 heterodimer interacts directly with the PSMA5 and PSMA7 proteasome alpha subunits. In terms of processing, degraded by the proteasome upon completion of 20S proteasome maturation. Highly expressed in testis with moderate expression in brain, liver and kidney and low levels in heart, skeletal muscle and pancreas.

The protein localises to the cytoplasm. It is found in the endoplasmic reticulum. Chaperone protein which promotes assembly of the 20S proteasome as part of a heterodimer with PSMG2. The PSMG1-PSMG2 heterodimer binds to the PSMA5 and PSMA7 proteasome subunits, promotes assembly of the proteasome alpha subunits into the heteroheptameric alpha ring and prevents alpha ring dimerization. In Mus musculus (Mouse), this protein is Proteasome assembly chaperone 1.